The sequence spans 190 residues: Large ribosomal subunit protein uL5 (190 aa).

Belongs to the universal ribosomal protein uL5 family. In terms of assembly, part of the 50S ribosomal subunit; part of the 5S rRNA/L5/L18/L25 subcomplex. Contacts the 5S rRNA and the P site tRNA. Forms a bridge to the 30S subunit in the 70S ribosome.

In terms of biological role, this is one of the proteins that bind and probably mediate the attachment of the 5S RNA into the large ribosomal subunit, where it forms part of the central protuberance. In the 70S ribosome it contacts protein S13 of the 30S subunit (bridge B1b), connecting the 2 subunits; this bridge is implicated in subunit movement. Contacts the P site tRNA; the 5S rRNA and some of its associated proteins might help stabilize positioning of ribosome-bound tRNAs. The polypeptide is Large ribosomal subunit protein uL5 (Blochmanniella floridana).